We begin with the raw amino-acid sequence, 254 residues long: Polysaccharide deacetylase domain-containing protein ECU11_0510 (254 aa).

One can recognise a NodB homology domain in the interval 26 to 210 (GMIAINFVDG…IGKDKGYRFV (185 aa)).

This chain is Polysaccharide deacetylase domain-containing protein ECU11_0510, found in Encephalitozoon cuniculi (strain GB-M1) (Microsporidian parasite).